The chain runs to 1677 residues: Pentafunctional AROM polypeptide (1677 aa).

Positions 1-394 (MAVADDTKAD…YEQKASIVED (394 aa)) are 3-dehydroquinate synthase. Residues 50-52 (DDN), 89-92 (ETSK), 120-122 (GGV), and D125 contribute to the NAD(+) site. A 7-phospho-2-dehydro-3-deoxy-D-arabino-heptonate-binding site is contributed by R136. 145-146 (TT) contributes to the NAD(+) binding site. 2 residues coordinate 7-phospho-2-dehydro-3-deoxy-D-arabino-heptonate: D152 and K158. An NAD(+)-binding site is contributed by K167. N168 serves as a coordination point for 7-phospho-2-dehydro-3-deoxy-D-arabino-heptonate. NAD(+)-binding positions include 185-188 (YLET) and N196. E200 serves as a coordination point for Zn(2+). 7-phospho-2-dehydro-3-deoxy-D-arabino-heptonate is bound by residues 200-203 (EVVK) and K260. The active-site Proton acceptor; for 3-dehydroquinate synthase activity is the E270. 7-phospho-2-dehydro-3-deoxy-D-arabino-heptonate is bound by residues 274-278 (RNLVN) and H281. Position 281 (H281) interacts with Zn(2+). The active-site Proton acceptor; for 3-dehydroquinate synthase activity is H285. 7-phospho-2-dehydro-3-deoxy-D-arabino-heptonate is bound by residues H297 and K366. H297 is a binding site for Zn(2+). Residues 407–858 (VVPSIPTGNV…WDDLENKIGI (452 aa)) are EPSP synthase. C840 functions as the For EPSP synthase activity in the catalytic mechanism. The interval 885–1113 (NSSILLIGMR…GQQRRTYFLC (229 aa)) is shikimate kinase. 892 to 899 (GMRGTGKT) contacts ATP. The segment at 1114-1341 (LTYPDVRHAF…AAPGQLSFKQ (228 aa)) is 3-dehydroquinase. The active-site Proton acceptor; for 3-dehydroquinate dehydratase activity is H1243. K1271 serves as the catalytic Schiff-base intermediate with substrate; for 3-dehydroquinate dehydratase activity. Residues 1354-1677 (SKHFHLFGTP…TRVWEKYGEV (324 aa)) form a shikimate dehydrogenase region.

It in the N-terminal section; belongs to the sugar phosphate cyclases superfamily. Dehydroquinate synthase family. The protein in the 2nd section; belongs to the EPSP synthase family. This sequence in the 3rd section; belongs to the shikimate kinase family. In the 4th section; belongs to the type-I 3-dehydroquinase family. It in the C-terminal section; belongs to the shikimate dehydrogenase family. As to quaternary structure, homodimer. The cofactor is Zn(2+).

The protein localises to the cytoplasm. The catalysed reaction is 7-phospho-2-dehydro-3-deoxy-D-arabino-heptonate = 3-dehydroquinate + phosphate. It catalyses the reaction 3-dehydroquinate = 3-dehydroshikimate + H2O. The enzyme catalyses shikimate + NADP(+) = 3-dehydroshikimate + NADPH + H(+). It carries out the reaction shikimate + ATP = 3-phosphoshikimate + ADP + H(+). The catalysed reaction is 3-phosphoshikimate + phosphoenolpyruvate = 5-O-(1-carboxyvinyl)-3-phosphoshikimate + phosphate. It participates in metabolic intermediate biosynthesis; chorismate biosynthesis; chorismate from D-erythrose 4-phosphate and phosphoenolpyruvate: step 2/7. The protein operates within metabolic intermediate biosynthesis; chorismate biosynthesis; chorismate from D-erythrose 4-phosphate and phosphoenolpyruvate: step 3/7. It functions in the pathway metabolic intermediate biosynthesis; chorismate biosynthesis; chorismate from D-erythrose 4-phosphate and phosphoenolpyruvate: step 4/7. Its pathway is metabolic intermediate biosynthesis; chorismate biosynthesis; chorismate from D-erythrose 4-phosphate and phosphoenolpyruvate: step 5/7. It participates in metabolic intermediate biosynthesis; chorismate biosynthesis; chorismate from D-erythrose 4-phosphate and phosphoenolpyruvate: step 6/7. In terms of biological role, the AROM polypeptide catalyzes 5 consecutive enzymatic reactions in prechorismate polyaromatic amino acid biosynthesis. This chain is Pentafunctional AROM polypeptide, found in Coprinopsis cinerea (strain Okayama-7 / 130 / ATCC MYA-4618 / FGSC 9003) (Inky cap fungus).